The chain runs to 237 residues: Sensory rhodopsin-2 (237 aa).

Over 1 to 2 (MA) the chain is Extracellular. The helical transmembrane segment at 3 to 23 (LTTWFWVGAVGMLAGTVLPIR) threads the bilayer. Topologically, residues 24 to 31 (DCIRHPSH) are cytoplasmic. The chain crosses the membrane as a helical span at residues 32–53 (RRYDLVLAGITGLAAIAYTTMG). Topologically, residues 54 to 67 (LGITATTVGDRTVY) are extracellular. A helical membrane pass occupies residues 68 to 89 (LARYIDWLVTTPLIVLYLAMLA). Residues 90–92 (RPG) lie on the Cytoplasmic side of the membrane. The helical transmembrane segment at 93 to 115 (HRTSAWLLAADVFVIAAGIAAAL) threads the bilayer. Over 116–119 (TTGV) the chain is Extracellular. Residues 120-147 (QRWLFFAVGAAGYAALLYGLLGTLPRAL) traverse the membrane as a helical segment. At 148–150 (GDD) the chain is on the cytoplasmic side. The helical transmembrane segment at 151–178 (PRVRSLFVTLRNITVVLWTLYPVVWLLS) threads the bilayer. The Extracellular segment spans residues 179–186 (PAGIGILQ). Residues 187–214 (TEMYTIVVVYLDFISKVAFVAFAVLGAD) form a helical membrane-spanning segment. Lys202 carries the N6-(retinylidene)lysine modification. The Cytoplasmic segment spans residues 215–237 (AVSRLVAADAAAPATAEPTPDGD).

It belongs to the archaeal/bacterial/fungal opsin family. As to quaternary structure, interacts with HTR-II.

The protein resides in the cell membrane. Functionally, photophobic photoreceptor responsible for the negative phototaxis. Activates the sensory rhodopsin II transducer (HTR-II) in response to blue light. The protein is Sensory rhodopsin-2 (sop2) of Halobacterium salinarum (strain ATCC 700922 / JCM 11081 / NRC-1) (Halobacterium halobium).